The primary structure comprises 111 residues: Nucleoid-associated protein LBA0378 (111 aa).

It belongs to the YbaB/EbfC family. In terms of assembly, homodimer.

The protein localises to the cytoplasm. It localises to the nucleoid. Binds to DNA and alters its conformation. May be involved in regulation of gene expression, nucleoid organization and DNA protection. This chain is Nucleoid-associated protein LBA0378, found in Lactobacillus acidophilus (strain ATCC 700396 / NCK56 / N2 / NCFM).